A 741-amino-acid polypeptide reads, in one-letter code: Beta-galactosidase 10 (741 aa).

A signal peptide spans 1 to 29 (MNRVTTESIASTAILVVMVFLFSWRSIEA). The N-linked (GlcNAc...) asparagine glycan is linked to N31. Residue E188 is the Proton donor of the active site. The active-site Nucleophile is E257. Residues N358, N396, N469, N525, and N583 are each glycosylated (N-linked (GlcNAc...) asparagine).

Belongs to the glycosyl hydrolase 35 family. In terms of tissue distribution, ubiquitous.

It localises to the secreted. The protein resides in the extracellular space. The protein localises to the apoplast. The enzyme catalyses Hydrolysis of terminal non-reducing beta-D-galactose residues in beta-D-galactosides.. The chain is Beta-galactosidase 10 (BGAL10) from Arabidopsis thaliana (Mouse-ear cress).